Reading from the N-terminus, the 54-residue chain is Ribulose bisphosphate carboxylase large chain (54 aa).

Residues 1–2 (MS) constitute a propeptide that is removed on maturation. Pro3 carries the post-translational modification N-acetylproline. An N6,N6,N6-trimethyllysine modification is found at Lys14.

Belongs to the RuBisCO large chain family. Type I subfamily. Heterohexadecamer of 8 large chains and 8 small chains.

The protein resides in the plastid. The protein localises to the chloroplast. The enzyme catalyses 2 (2R)-3-phosphoglycerate + 2 H(+) = D-ribulose 1,5-bisphosphate + CO2 + H2O. It carries out the reaction D-ribulose 1,5-bisphosphate + O2 = 2-phosphoglycolate + (2R)-3-phosphoglycerate + 2 H(+). Functionally, ruBisCO catalyzes two reactions: the carboxylation of D-ribulose 1,5-bisphosphate, the primary event in carbon dioxide fixation, as well as the oxidative fragmentation of the pentose substrate in the photorespiration process. Both reactions occur simultaneously and in competition at the same active site. This Icacina mannii protein is Ribulose bisphosphate carboxylase large chain (rbcL).